The sequence spans 460 residues: Transcriptional regulatory protein UME1 (460 aa).

An NEE-box motif is present at residues 14–22; sequence NEEFKIWKK. WD repeat units follow at residues 233–271, 276–316, 339–379, and 411–451; these read PGIK…KPLW, SLDG…ALGD, FYSE…AIYN, and GENN…VLDG.

Component of the RPD3C(L) complex composed of at least ASH1, CTI6, DEP1, PHO23, RPD3, RXT2, RXT3, SAP30, SDS3, SIN3, UME1 and UME6. Component of the RPD3C(S) complex composed of at least EAF3, RCO1, RPD3, SIN3, and UME1. Interacts with RPD3.

The protein localises to the cytoplasm. Its subcellular location is the nucleus. Its function is as follows. Catalytic component of the RPD3 histone deacetylase complexes RPD3C(L) and RPD3C(S) responsible for the deacetylation of lysine residues on the N-terminal part of the core histones (H2A, H2B, H3 and H4). Histone deacetylation gives a tag for epigenetic repression and plays an important role in transcriptional regulation, cell cycle progression and developmental events. The polypeptide is Transcriptional regulatory protein UME1 (UME1) (Saccharomyces cerevisiae (strain ATCC 204508 / S288c) (Baker's yeast)).